Consider the following 291-residue polypeptide: Transcription antitermination protein NusB (291 aa).

It belongs to the NusB family.

In terms of biological role, involved in transcription antitermination. Required for transcription of ribosomal RNA (rRNA) genes. Binds specifically to the boxA antiterminator sequence of the ribosomal RNA (rrn) operons. The protein is Transcription antitermination protein NusB of Synechococcus sp. (strain JA-2-3B'a(2-13)) (Cyanobacteria bacterium Yellowstone B-Prime).